The chain runs to 92 residues: Small ribosomal subunit protein uS19 (92 aa).

The protein belongs to the universal ribosomal protein uS19 family.

Functionally, protein S19 forms a complex with S13 that binds strongly to the 16S ribosomal RNA. This Rhodopseudomonas palustris (strain BisB18) protein is Small ribosomal subunit protein uS19.